A 127-amino-acid polypeptide reads, in one-letter code: Small ribosomal subunit protein uS12 (127 aa).

Asp-89 carries the 3-methylthioaspartic acid modification.

Belongs to the universal ribosomal protein uS12 family. In terms of assembly, part of the 30S ribosomal subunit. Contacts proteins S8 and S17. May interact with IF1 in the 30S initiation complex.

In terms of biological role, with S4 and S5 plays an important role in translational accuracy. Functionally, interacts with and stabilizes bases of the 16S rRNA that are involved in tRNA selection in the A site and with the mRNA backbone. Located at the interface of the 30S and 50S subunits, it traverses the body of the 30S subunit contacting proteins on the other side and probably holding the rRNA structure together. The combined cluster of proteins S8, S12 and S17 appears to hold together the shoulder and platform of the 30S subunit. The sequence is that of Small ribosomal subunit protein uS12 from Nautilia profundicola (strain ATCC BAA-1463 / DSM 18972 / AmH).